The sequence spans 327 residues: MFSFLCLVELALPMSKTLVDSYGRRIRKLRVSLTDQCNLRCHYCMPVDAIFLEQSSYLSCQEYGEIIGELIALGLEEVRLTGGEPLLRRNFTEIVRAIGQLKLKKIGLTTNGIVLDRHLDTLGENNVLDLNVSLDSLNAKTFSEITHRNCLNTILRNLELASRQGFKIKLNTVVMREINDREIFDLIEYAKRWEMEIRFLEIMRIGYACRHQEKTFISAQELLAKIQQKYSLKPIQSALDATAFRYSTSCGGIIGFIASESQPFCGHCSRWRLSVDGTLRACLLKNEGINIRNFSSLERQHVYQQLLGMKPYLRPPEVSHAMHQIGG.

The 213-residue stretch at 21–233 (SYGRRIRKLR…AKIQQKYSLK (213 aa)) folds into the Radical SAM core domain. Residue arginine 30 participates in GTP binding. [4Fe-4S] cluster contacts are provided by cysteine 37 and cysteine 41. Tyrosine 43 serves as a coordination point for S-adenosyl-L-methionine. Cysteine 44 provides a ligand contact to [4Fe-4S] cluster. Arginine 79 serves as a coordination point for GTP. Glycine 83 lines the S-adenosyl-L-methionine pocket. Threonine 109 is a GTP binding site. Serine 133 contributes to the S-adenosyl-L-methionine binding site. Lysine 169 is a GTP binding site. Methionine 203 is a binding site for S-adenosyl-L-methionine. Positions 265 and 268 each coordinate [4Fe-4S] cluster. GTP is bound at residue 270 to 272 (RWR). [4Fe-4S] cluster is bound at residue cysteine 282.

The protein belongs to the radical SAM superfamily. MoaA family. As to quaternary structure, monomer and homodimer. [4Fe-4S] cluster is required as a cofactor.

The enzyme catalyses GTP + AH2 + S-adenosyl-L-methionine = (8S)-3',8-cyclo-7,8-dihydroguanosine 5'-triphosphate + 5'-deoxyadenosine + L-methionine + A + H(+). Its pathway is cofactor biosynthesis; molybdopterin biosynthesis. In terms of biological role, catalyzes the cyclization of GTP to (8S)-3',8-cyclo-7,8-dihydroguanosine 5'-triphosphate. The chain is GTP 3',8-cyclase from Synechocystis sp. (strain ATCC 27184 / PCC 6803 / Kazusa).